Consider the following 235-residue polypeptide: Cytidylate kinase (235 aa).

ATP is bound at residue 16–24 (GPAASGKST).

Belongs to the cytidylate kinase family. Type 1 subfamily.

The protein resides in the cytoplasm. It carries out the reaction CMP + ATP = CDP + ADP. The catalysed reaction is dCMP + ATP = dCDP + ADP. The chain is Cytidylate kinase from Chlorobaculum tepidum (strain ATCC 49652 / DSM 12025 / NBRC 103806 / TLS) (Chlorobium tepidum).